We begin with the raw amino-acid sequence, 318 residues long: Tyrosine--tRNA ligase (318 aa).

Tyr35 is a binding site for L-tyrosine. Positions 40–48 match the 'HIGH' region motif; sequence PSGKVHLGH. Residues Tyr154, Gln158, Asp161, and Gln176 each contribute to the L-tyrosine site. A 'KMSKS' region motif is present at residues 211-215; that stretch reads KMSSS. Ser214 contacts ATP.

Belongs to the class-I aminoacyl-tRNA synthetase family. TyrS type 3 subfamily. As to quaternary structure, homodimer.

It is found in the cytoplasm. It carries out the reaction tRNA(Tyr) + L-tyrosine + ATP = L-tyrosyl-tRNA(Tyr) + AMP + diphosphate + H(+). In terms of biological role, catalyzes the attachment of tyrosine to tRNA(Tyr) in a two-step reaction: tyrosine is first activated by ATP to form Tyr-AMP and then transferred to the acceptor end of tRNA(Tyr). This Methanosphaera stadtmanae (strain ATCC 43021 / DSM 3091 / JCM 11832 / MCB-3) protein is Tyrosine--tRNA ligase.